The sequence spans 567 residues: TNF receptor-associated factor 3 (567 aa).

Residues 1–26 are disordered; that stretch reads MESSKKMDAAGTLQPNPPLKLQPDRG. Cys-55 participates in a covalent cross-link: Glycyl cysteine thioester (Cys-Gly) (interchain with G-Cter in ubiquitin). Residues 67-76 form an RING-type zinc finger; sequence CGHRFCESCM. Lys-106 participates in a covalent cross-link: Glycyl lysine isopeptide (Lys-Gly) (interchain with G-Cter in ubiquitin). Cys-123 is covalently cross-linked (Glycyl cysteine thioester (Cys-Gly) (interchain with G-Cter in ubiquitin)). 2 TRAF-type zinc fingers span residues 134-189 and 190-248; these read VHLK…IKLQ and KHED…QQIK. Glycyl lysine isopeptide (Lys-Gly) (interchain with G-Cter in ubiquitin) cross-links involve residues Lys-155 and Lys-167. The stretch at 266-337 forms a coiled coil; that stretch reads SNSLEKKVSL…KLKELDKEIR (72 aa). Lys-328 is covalently cross-linked (Glycyl lysine isopeptide (Lys-Gly) (interchain with G-Cter in ubiquitin)). Positions 414-559 constitute an MATH domain; sequence NGVLIWKIRD…DDTIFIKVIV (146 aa).

This sequence belongs to the TNF receptor-associated factor family. A subfamily. Homotrimer. Heterotrimer with TRAF2 and TRAF5. Interacts with LTBR/TNFRSF3, TNFRSF4, TNFRSF5/CD40, TNFRSF8/CD30, TNFRSF13C TNFRSF17/BCMA, TLR4 and EDAR. Interacts with MAP3K5, MAP3K14, TRAIP/TRIP, TDP2/TTRAP, TANK/ITRAF and TRAF3IP1. Interaction with TNFRSF5/CD40 is modulated by TANK/ITRAF, which competes for the same binding site. Interacts with TICAM1. Interacts with TRAFD1. Interacts with OTUB1, OTUB2 and OTUD5. Interacts with RNF216, OPTN and TBK1. Identified in a complex with TRAF2, MAP3K14 and BIRC3. Upon exposure to bacterial lipopolysaccharide (LPS), recruited to a transient complex containing TLR4, TRAF3, TRAF6, IKBKG, MAP3K7, MYD88, TICAM1, BIRC2, BIRC3 and UBE2N. Interacts (via RING-type zinc finger domain) with SRC. Interacts with CARD14. Interacts (via MATH domain) with PTPN22; the interaction promotes TRAF3 polyubiquitination. Interacts with MAVS. Directly interacts with DDX3X; this interaction stimulates TRAF3 'Lys-63' ubiquitination. Interacts with IRF3. Interacts with IKBKE in the course of viral infection. Interacts with TRIM35. Interacts with GAPDH; promoting TRAF3 ubiquitination. Interacts with PPP3CA and PPP3CB. Interacts with RALGDS. Interacts with FBXO11. Undergoes 'Lys-48'-linked polyubiquitination, leading to its proteasomal degradation in response to signaling by TNFSF13B, TLR4 or through CD40. 'Lys-48'-linked polyubiquitinated form is deubiquitinated by OTUD7B, preventing TRAF3 proteolysis and over-activation of non-canonical NF-kappa-B. Undergoes 'Lys-63'-linked ubiquitination during early stages of virus infection, and 'Lys-48'-linked ubiquitination during later stages. Undergoes both 'Lys-48'-linked and 'Lys-63'-linked ubiquitination in response to TLR3 and TLR4 signaling. 'Lys-63'-linked ubiquitination can be mediated by TRIM35. Deubiquitinated by OTUB1, OTUB2 and OTUD5. Undergoes 'Lys-63'-linked deubiquitination by MYSM1 to terminate the pattern-recognition receptors/PRRs pathways. Ubiquitinated at Lys-328 by the SCF(FBXL2) complex, leading to its degradation by the proteasome. Post-translationally, undergoes 'Lys-48'-linked polyubiquitination, leading to its proteasomal degradation in response to signaling by TNFSF13B, TLR4 or through CD40. 'Lys-48'-linked polyubiquitinated form is deubiquitinated by OTUD7B, preventing TRAF3 proteolysis and over-activation of non-canonical NF-kappa-B. Undergoes 'Lys-63'-linked ubiquitination during early stages of virus infection, and 'Lys-48'-linked ubiquitination during later stages. Undergoes both 'Lys-48'-linked and 'Lys-63'-linked ubiquitination in response to TLR3 and TLR4 signaling. 'Lys-63'-linked ubiquitination can be mediated by TRIM35. Deubiquitinated by OTUB1, OTUB2 and OTUD5. Undergoes 'Lys-63'-linked deubiquitination by MYSM1 to terminate the pattern-recognition receptors/PRRs pathways. Also undergoes 'Lys-29'-linked ubiquitination on Cys-55 and Cys-123 by NEDD4L; leading to increased 'Lys-48'- and 'Lys-63'-linked ubiquitination as well as increased binding to TBK1. TLR4 signals emanating from bacteria containing vesicles trigger 'Lys-33'-linked polyubiquitination that promotes the assembly of the exocyst complex thereby connecting innate immune signaling to the cellular trafficking apparatus. Deubiquitinated by USP25 during viral infection, leading to TRAF3 stabilization and type I interferon production. 'Lys-63'-linked ubiquitination by FBXO11 in a NEDD8-dependent manner promotes the amplification of IFN-I signaling. Detected in bone marrow macrophages and spleen B-cells (at protein level). In adult, highest in brain. Also found in kidney, heart, thymus, spleen, lung, muscle, testis and ovary. Not found in liver.

The protein localises to the cytoplasm. The protein resides in the endosome. Its subcellular location is the mitochondrion. The catalysed reaction is S-ubiquitinyl-[E2 ubiquitin-conjugating enzyme]-L-cysteine + [acceptor protein]-L-lysine = [E2 ubiquitin-conjugating enzyme]-L-cysteine + N(6)-ubiquitinyl-[acceptor protein]-L-lysine.. In terms of biological role, cytoplasmic E3 ubiquitin ligase that regulates various signaling pathways, such as the NF-kappa-B, mitogen-activated protein kinase (MAPK) and interferon regulatory factor (IRF) pathways, and thus controls a lot of biological processes in both immune and non-immune cell types. In TLR and RLR signaling pathways, acts as an E3 ubiquitin ligase promoting the synthesis of 'Lys-63'-linked polyubiquitin chains on several substrates such as ASC that lead to the activation of the type I interferon response or the inflammasome. Following the activation of certain TLRs such as TLR4, acts as a negative NF-kappa-B regulator, possibly to avoid unregulated inflammatory response, and its degradation via 'Lys-48'-linked polyubiquitination is required for MAPK activation and production of inflammatory cytokines. Alternatively, when TLR4 orchestrates bacterial expulsion, TRAF3 undergoes 'Lys-33'-linked polyubiquitination and subsequently binds to RALGDS, mobilizing the exocyst complex to rapidly expel intracellular bacteria back for clearance. Also acts as a constitutive negative regulator of the alternative NF-kappa-B pathway, which controls B-cell survival and lymphoid organ development. Required for normal antibody isotype switching from IgM to IgG. Plays a role T-cell dependent immune responses. Down-regulates proteolytic processing of NFKB2, and thereby inhibits non-canonical activation of NF-kappa-B. Promotes ubiquitination and proteasomal degradation of MAP3K14. The polypeptide is TNF receptor-associated factor 3 (Mus musculus (Mouse)).